Consider the following 311-residue polypeptide: tRNA(Ile)-lysidine synthase (311 aa).

ATP is bound at residue 31-36; sequence SGGKDS.

Belongs to the tRNA(Ile)-lysidine synthase family.

Its subcellular location is the cytoplasm. The enzyme catalyses cytidine(34) in tRNA(Ile2) + L-lysine + ATP = lysidine(34) in tRNA(Ile2) + AMP + diphosphate + H(+). Ligates lysine onto the cytidine present at position 34 of the AUA codon-specific tRNA(Ile) that contains the anticodon CAU, in an ATP-dependent manner. Cytidine is converted to lysidine, thus changing the amino acid specificity of the tRNA from methionine to isoleucine. The protein is tRNA(Ile)-lysidine synthase of Petrotoga mobilis (strain DSM 10674 / SJ95).